A 358-amino-acid polypeptide reads, in one-letter code: Low-specificity L-threonine aldolase 1 (358 aa).

N6-(pyridoxal phosphate)lysine is present on Lys207.

The protein belongs to the threonine aldolase family. Pyridoxal 5'-phosphate is required as a cofactor. As to expression, expressed in root tips, seedlings, carpels and seeds.

The catalysed reaction is L-threonine = acetaldehyde + glycine. It catalyses the reaction L-allo-threonine = acetaldehyde + glycine. It participates in amino-acid degradation; L-threonine degradation via aldolase pathway; acetaldehyde and glycine from L-threonine: step 1/1. Its function is as follows. Threonine aldolase involved in threonine degradation to glycine. May play a role in the removal of L-allo-threonine. The chain is Low-specificity L-threonine aldolase 1 from Arabidopsis thaliana (Mouse-ear cress).